The following is a 351-amino-acid chain: Ribosomal RNA large subunit methyltransferase M (351 aa).

S-adenosyl-L-methionine is bound by residues Ser-186, 219 to 222 (APGG), Asp-238, Asp-258, and Asp-274. The active-site Proton acceptor is Lys-303.

Belongs to the class I-like SAM-binding methyltransferase superfamily. RNA methyltransferase RlmE family. RlmM subfamily. As to quaternary structure, monomer.

It localises to the cytoplasm. The catalysed reaction is cytidine(2498) in 23S rRNA + S-adenosyl-L-methionine = 2'-O-methylcytidine(2498) in 23S rRNA + S-adenosyl-L-homocysteine + H(+). Functionally, catalyzes the 2'-O-methylation at nucleotide C2498 in 23S rRNA. The chain is Ribosomal RNA large subunit methyltransferase M from Xylella fastidiosa (strain 9a5c).